Here is a 228-residue protein sequence, read N- to C-terminus: Ribonuclease 3 (228 aa).

In terms of domain architecture, RNase III spans 5 to 134 (RSKLEKDYGI…FLGALLLDKG (130 aa)). Residue glutamate 47 participates in Mg(2+) binding. Aspartate 51 is a catalytic residue. Positions 120 and 123 each coordinate Mg(2+). Residue glutamate 123 is part of the active site. One can recognise a DRBM domain in the interval 160–228 (DYKTSLQELL…AAKNALATLQ (69 aa)).

Belongs to the ribonuclease III family. Homodimer. It depends on Mg(2+) as a cofactor.

The protein resides in the cytoplasm. The catalysed reaction is Endonucleolytic cleavage to 5'-phosphomonoester.. Digests double-stranded RNA. Involved in the processing of primary rRNA transcript to yield the immediate precursors to the large and small rRNAs (23S and 16S). Processes some mRNAs, and tRNAs when they are encoded in the rRNA operon. Processes pre-crRNA and tracrRNA of type II CRISPR loci if present in the organism. This Streptococcus agalactiae serotype III (strain NEM316) protein is Ribonuclease 3.